A 337-amino-acid polypeptide reads, in one-letter code: DNA-directed RNA polymerase subunit alpha (337 aa).

Residues 1-233 are alpha N-terminal domain (alpha-NTD); sequence MVREKVTVST…DLFIPFLHME (233 aa). The alpha C-terminal domain (alpha-CTD) stretch occupies residues 265-337; that stretch reads KKIALKSIFI…FVIDLAKNKF (73 aa).

The protein belongs to the RNA polymerase alpha chain family. In terms of assembly, in plastids the minimal PEP RNA polymerase catalytic core is composed of four subunits: alpha, beta, beta', and beta''. When a (nuclear-encoded) sigma factor is associated with the core the holoenzyme is formed, which can initiate transcription.

It localises to the plastid. It is found in the chloroplast. It carries out the reaction RNA(n) + a ribonucleoside 5'-triphosphate = RNA(n+1) + diphosphate. Its function is as follows. DNA-dependent RNA polymerase catalyzes the transcription of DNA into RNA using the four ribonucleoside triphosphates as substrates. The protein is DNA-directed RNA polymerase subunit alpha of Solanum lycopersicum (Tomato).